The following is a 356-amino-acid chain: UDP-N-acetylglucosamine--N-acetylmuramyl-(pentapeptide) pyrophosphoryl-undecaprenol N-acetylglucosamine transferase (356 aa).

Residues 10-12 (TAG), Asn-123, Arg-159, Ser-193, Ile-240, and Gln-284 each bind UDP-N-acetyl-alpha-D-glucosamine.

It belongs to the glycosyltransferase 28 family. MurG subfamily.

It localises to the cell membrane. The enzyme catalyses di-trans,octa-cis-undecaprenyl diphospho-N-acetyl-alpha-D-muramoyl-L-alanyl-D-glutamyl-meso-2,6-diaminopimeloyl-D-alanyl-D-alanine + UDP-N-acetyl-alpha-D-glucosamine = di-trans,octa-cis-undecaprenyl diphospho-[N-acetyl-alpha-D-glucosaminyl-(1-&gt;4)]-N-acetyl-alpha-D-muramoyl-L-alanyl-D-glutamyl-meso-2,6-diaminopimeloyl-D-alanyl-D-alanine + UDP + H(+). Its pathway is cell wall biogenesis; peptidoglycan biosynthesis. Functionally, cell wall formation. Catalyzes the transfer of a GlcNAc subunit on undecaprenyl-pyrophosphoryl-MurNAc-pentapeptide (lipid intermediate I) to form undecaprenyl-pyrophosphoryl-MurNAc-(pentapeptide)GlcNAc (lipid intermediate II). This chain is UDP-N-acetylglucosamine--N-acetylmuramyl-(pentapeptide) pyrophosphoryl-undecaprenol N-acetylglucosamine transferase, found in Corynebacterium glutamicum (strain R).